Consider the following 456-residue polypeptide: DnaJ homolog dnj-10 (456 aa).

Residues 44-108 enclose the J domain; that stretch reads DYYKTLGVDK…TKRQEYDAYG (65 aa). The segment at 178–257 adopts a CR-type zinc-finger fold; sequence GATKNVSVNV…CEGEGQTVQR (80 aa). 3 CXXCXGXG motif repeats span residues 208-215, 231-238, and 245-252; these read CPYCNGTG, CNRCRGSG, and CQECEGEG. A compositionally biased stretch (basic and acidic residues) spans 395–429; it reads KGLEKNQKTEEKETKKNEEKKSEGASESQKRRSEP. The segment at 395-443 is disordered; it reads KGLEKNQKTEEKETKKNEEKKSEGASESQKRRSEPVAENAETIDENQEN.

This is DnaJ homolog dnj-10 (dnj-10) from Caenorhabditis elegans.